A 304-amino-acid polypeptide reads, in one-letter code: Large ribosomal subunit protein uL18 (304 aa).

It belongs to the universal ribosomal protein uL18 family. As to quaternary structure, component of a hexameric 5S RNP precursor complex, composed of 5S RNA, RRS1, RPF2, RPL5, RPL11 and SYO1; this complex acts as a precursor for ribosome assembly.

It is found in the cytoplasm. In terms of biological role, component of the ribosome, a large ribonucleoprotein complex responsible for the synthesis of proteins in the cell. The small ribosomal subunit (SSU) binds messenger RNAs (mRNAs) and translates the encoded message by selecting cognate aminoacyl-transfer RNA (tRNA) molecules. The large subunit (LSU) contains the ribosomal catalytic site termed the peptidyl transferase center (PTC), which catalyzes the formation of peptide bonds, thereby polymerizing the amino acids delivered by tRNAs into a polypeptide chain. The nascent polypeptides leave the ribosome through a tunnel in the LSU and interact with protein factors that function in enzymatic processing, targeting, and the membrane insertion of nascent chains at the exit of the ribosomal tunnel. The sequence is that of Large ribosomal subunit protein uL18 from Chaetomium thermophilum (strain DSM 1495 / CBS 144.50 / IMI 039719) (Thermochaetoides thermophila).